Here is a 475-residue protein sequence, read N- to C-terminus: Ribulose bisphosphate carboxylase large chain (475 aa).

Positions 1–2 (MS) are excised as a propeptide. P3 bears the N-acetylproline mark. N6,N6,N6-trimethyllysine is present on K14. Substrate-binding residues include N123 and T173. Residue K175 is the Proton acceptor of the active site. K177 is a binding site for substrate. Residues K201, D203, and E204 each contribute to the Mg(2+) site. The residue at position 201 (K201) is an N6-carboxylysine. The active-site Proton acceptor is the H294. Positions 295, 327, and 379 each coordinate substrate.

It belongs to the RuBisCO large chain family. Type I subfamily. As to quaternary structure, heterohexadecamer of 8 large chains and 8 small chains; disulfide-linked. The disulfide link is formed within the large subunit homodimers. Mg(2+) serves as cofactor. In terms of processing, the disulfide bond which can form in the large chain dimeric partners within the hexadecamer appears to be associated with oxidative stress and protein turnover.

The protein resides in the plastid. The protein localises to the chloroplast. The catalysed reaction is 2 (2R)-3-phosphoglycerate + 2 H(+) = D-ribulose 1,5-bisphosphate + CO2 + H2O. It carries out the reaction D-ribulose 1,5-bisphosphate + O2 = 2-phosphoglycolate + (2R)-3-phosphoglycerate + 2 H(+). Its function is as follows. RuBisCO catalyzes two reactions: the carboxylation of D-ribulose 1,5-bisphosphate, the primary event in carbon dioxide fixation, as well as the oxidative fragmentation of the pentose substrate in the photorespiration process. Both reactions occur simultaneously and in competition at the same active site. The protein is Ribulose bisphosphate carboxylase large chain of Anthoceros angustus (Hornwort).